The following is an 81-amino-acid chain: Serine protease inhibitor Kazal-type 2 (81 aa).

Residues 1–21 form the signal peptide; it reads MALAVLRLALLLLAVTFAGPL. In terms of domain architecture, Kazal-like spans 27–81; that stretch reads KYKTPFCARYQLPGCPRDFNPVCGTDMITYPNECTLCMKIRESGQNIKILRRGPC. 3 disulfides stabilise this stretch: Cys-33-Cys-63, Cys-41-Cys-60, and Cys-49-Cys-81.

As to expression, more abundant in epididymis than in testis.

It is found in the secreted. It localises to the cytoplasmic vesicle. The protein localises to the secretory vesicle. The protein resides in the acrosome. Strong inhibitor of acrosin in male and/or female genital tract. Also inhibits trypsin. Its function is as follows. As a strong inhibitor of acrosin, it is required for normal spermiogenesis. It probably hinders premature activation of proacrosin and other proteases, thus preventing the cascade of events leading to spermiogenesis defects. May be involved in the regulation of serine protease-dependent germ cell apoptosis. It also inhibits trypsin. This chain is Serine protease inhibitor Kazal-type 2 (SPINK2), found in Macaca fascicularis (Crab-eating macaque).